Reading from the N-terminus, the 507-residue chain is MINDLRTVPAALDRLVRQLPDHTALIAEDRRFTSTELRDAVYGAAAALIALGVEPADRVAIWSPNTWHWVVACLAIHHAGAAVVPLNTRYTATEATDILDRAGAPVLFAAGLFLGADRAAGLDRAALPALRHVVRVPVEADDGTWDEFIATGAGALDAVAARAAAVAPQDVSDILFTSGTTGRSKGVLCAHRQSLSASASWAANGKITSDDRYLCINPFFHNFGYKAGILACLQTGATLIPHVTFDPLHALRAIERHRITVLPGPPTIYQSLLDHPARKDFDLSSLRFAVTGAATVPVVLVERMQSELDIDIVLTAYGLTEANGMGTMCRPEDDAVTVATTCGRPFADFELRIADDGEVLLRGPNVMVGYLDDTEATAAAIDADGWLHTGDIGAVDQAGNLRITDRLKDMYICGGFNVYPAEVEQVLARMDGVADAAVIGVPDQRLGEVGRAFVVARPGTGLDEASVIAYTREHLANFKTPRSVRFVDVLPRNAAGKVSKPQLRELG.

Residues 177-185 (TSGTTGRSK), Asp391, Arg406, and Lys497 each bind ATP.

The protein belongs to the ATP-dependent AMP-binding enzyme family.

It catalyses the reaction 3-[(3aS,4S,7aS)-7a-methyl-1,5-dioxo-octahydro-1H-inden-4-yl]propanoate + ATP + CoA = 3-[(3aS,4S,7aS)-7a-methyl-1,5-dioxo-octahydro-1H-inden-4-yl]propanoyl-CoA + AMP + diphosphate. The catalysed reaction is 5-hydroxy-3-[(3aS,4S,5R,7aS)-7a-methyl-1,5-dioxo-octahydro-1H-inden-4-yl]propanoate + ATP + CoA = 3-[(3aS,4S,5R,7aS)-5-hydroxy-7a-methyl-1-oxo-octahydro-1H-inden-4-yl]propanoyl-CoA + AMP + diphosphate. Functionally, involved in the catabolism of the rings C and D of cholesterol. Catalyzes the ATP-dependent CoA thioesterification of 3aalpha-H-4alpha(3'-propanoate)-7abeta-methylhexahydro-1,5-indanedione (HIP) to yield HIP-CoA. It can also use the hydroxylated analogs of HIP, 5alpha-OH HIP and 1beta-OH HIP. It requires that the side chain at C17 is completely removed. In Mycobacterium tuberculosis (strain ATCC 25618 / H37Rv), this protein is 3-[(3aS,4S,7aS)-7a-methyl-1,5-dioxo-octahydro-1H-inden-4-yl]propanoyl:CoA ligase.